A 136-amino-acid polypeptide reads, in one-letter code: Protein NrdI (136 aa).

This sequence belongs to the NrdI family.

In terms of biological role, probably involved in ribonucleotide reductase function. This Escherichia coli O7:K1 (strain IAI39 / ExPEC) protein is Protein NrdI.